Reading from the N-terminus, the 427-residue chain is Serine--tRNA ligase 2 (427 aa).

A compositionally biased stretch (basic and acidic residues) spans 35-53 (RRRSEAQAEVTRLRTELNR). The interval 35–72 (RRRSEAQAEVTRLRTELNRTSRARGRSGPPSEEEKEAA) is disordered. Residue 230–232 (TAE) coordinates L-serine. 261-263 (RAE) serves as a coordination point for ATP. Glu284 contacts L-serine. Residue 348-351 (EISS) participates in ATP binding. Ser383 serves as a coordination point for L-serine.

Belongs to the class-II aminoacyl-tRNA synthetase family. Type-1 seryl-tRNA synthetase subfamily. In terms of assembly, homodimer. The tRNA molecule binds across the dimer.

It is found in the cytoplasm. The catalysed reaction is tRNA(Ser) + L-serine + ATP = L-seryl-tRNA(Ser) + AMP + diphosphate + H(+). The enzyme catalyses tRNA(Sec) + L-serine + ATP = L-seryl-tRNA(Sec) + AMP + diphosphate + H(+). It functions in the pathway aminoacyl-tRNA biosynthesis; selenocysteinyl-tRNA(Sec) biosynthesis; L-seryl-tRNA(Sec) from L-serine and tRNA(Sec): step 1/1. Functionally, catalyzes the attachment of serine to tRNA(Ser). Is also able to aminoacylate tRNA(Sec) with serine, to form the misacylated tRNA L-seryl-tRNA(Sec), which will be further converted into selenocysteinyl-tRNA(Sec). The sequence is that of Serine--tRNA ligase 2 from Streptomyces avermitilis (strain ATCC 31267 / DSM 46492 / JCM 5070 / NBRC 14893 / NCIMB 12804 / NRRL 8165 / MA-4680).